Reading from the N-terminus, the 219-residue chain is 3-demethoxyubiquinol 3-hydroxylase (219 aa).

Positions 21–51 (RTLTPGTTQAERTPAHAAPAPDAPEAGTLPS) are disordered. Residues 35–46 (AHAAPAPDAPEA) are compositionally biased toward low complexity. E68, E98, H101, E150, E182, and H185 together coordinate Fe cation.

The protein belongs to the COQ7 family. Requires Fe cation as cofactor.

It is found in the cell membrane. It catalyses the reaction a 5-methoxy-2-methyl-3-(all-trans-polyprenyl)benzene-1,4-diol + AH2 + O2 = a 3-demethylubiquinol + A + H2O. It functions in the pathway cofactor biosynthesis; ubiquinone biosynthesis. Functionally, catalyzes the hydroxylation of 2-nonaprenyl-3-methyl-6-methoxy-1,4-benzoquinol during ubiquinone biosynthesis. The chain is 3-demethoxyubiquinol 3-hydroxylase from Alcanivorax borkumensis (strain ATCC 700651 / DSM 11573 / NCIMB 13689 / SK2).